The sequence spans 388 residues: Protein TsgA homolog (388 aa).

Helical transmembrane passes span 11 to 31 (WISF…GMIM), 50 to 70 (TFLN…IEII), 77 to 97 (IFSF…NSIF), 101 to 121 (INMF…TFII), 133 to 153 (LLLL…IVTA), 160 to 180 (IIWY…FLLT), 206 to 226 (VFLL…FISW), 244 to 264 (SLVS…SFII), 268 to 288 (NLYR…YCFI), 298 to 318 (YIII…ITLA), 332 to 352 (LILL…SPIV), and 360 to 380 (TLIS…LIYF).

Belongs to the major facilitator superfamily. TsgA family.

The protein resides in the cell membrane. This Buchnera aphidicola subsp. Acyrthosiphon pisum (strain Tuc7) protein is Protein TsgA homolog.